The sequence spans 765 residues: LPS-assembly protein LptD (765 aa).

A signal peptide spans M1–A18.

It belongs to the LptD family. As to quaternary structure, component of the lipopolysaccharide transport and assembly complex. Interacts with LptE and LptA.

It localises to the cell outer membrane. Functionally, together with LptE, is involved in the assembly of lipopolysaccharide (LPS) at the surface of the outer membrane. In Shewanella sp. (strain MR-4), this protein is LPS-assembly protein LptD.